The chain runs to 614 residues: Putative ankyrin repeat protein RBE_0997 (614 aa).

ANK repeat units lie at residues 3–32, 36–65, 69–98, 102–131, 135–164, 168–197, 201–231, 239–268, and 272–301; these read KDEE…DPNI, DDKP…NPNA, DGEP…DPNL, RKNT…NLNA, SGYP…NPNL, DGSP…NVEA, DGNT…DKEK, NGET…TVNI, and AGYT…ELKE. Residues 348 to 580 enclose the Glutamine amidotransferase type-1 domain; it reads NVEDIDYRKI…VQSAETFMNK (233 aa). Residue C444 is the Nucleophile of the active site. Residues H547 and E549 contribute to the active site.

The polypeptide is Putative ankyrin repeat protein RBE_0997 (Rickettsia bellii (strain RML369-C)).